The following is a 471-amino-acid chain: Putative multidrug resistance protein MdtD (471 aa).

A run of 13 helical transmembrane segments spans residues 12-32 (LWIV…VNTA), 49-69 (MVVV…GWLA), 77-97 (IFFT…WSST), 102-124 (VLAR…LTVM), 138-158 (FVTL…GILV), 165-185 (WIFL…LMLM), 197-217 (LSGF…LDGS), 222-242 (LSPL…ALYL), 263-283 (FSLG…LPFM), 286-306 (VFLQ…MIPM), 342-362 (LLFM…VLFL), 396-416 (MIMQ…LGMF), and 431-451 (VFMY…LIFA).

It belongs to the major facilitator superfamily. TCR/Tet family.

The protein resides in the cell inner membrane. The chain is Putative multidrug resistance protein MdtD from Citrobacter koseri (strain ATCC BAA-895 / CDC 4225-83 / SGSC4696).